The sequence spans 150 residues: Large ribosomal subunit protein bL9 (150 aa).

This sequence belongs to the bacterial ribosomal protein bL9 family.

In terms of biological role, binds to the 23S rRNA. The sequence is that of Large ribosomal subunit protein bL9 from Herminiimonas arsenicoxydans.